We begin with the raw amino-acid sequence, 105 residues long: MANQVMRITLKAYDHHLIDASAGKIIETVKKTGSKVSGPVPLPTKKEIVTVLRAVHKYKDSREQFEQRTHKRLIDIIAPTQKTVDALSRLEMPAGVYIDIKMKAK.

This sequence belongs to the universal ribosomal protein uS10 family. As to quaternary structure, part of the 30S ribosomal subunit.

In terms of biological role, involved in the binding of tRNA to the ribosomes. This is Small ribosomal subunit protein uS10 from Lachnoclostridium phytofermentans (strain ATCC 700394 / DSM 18823 / ISDg) (Clostridium phytofermentans).